Reading from the N-terminus, the 138-residue chain is Homeobox protein HD-11 (138 aa).

The homeobox DNA-binding region spans 30–89; sequence CTGKQMRKTRLQTCVLNRIFEISRFPSSKTIVDLALLINVHPKSIQKWFQNTRQAIRKKG.

The protein localises to the nucleus. This chain is Homeobox protein HD-11 (HD-11), found in Encephalitozoon cuniculi (strain GB-M1) (Microsporidian parasite).